The primary structure comprises 122 residues: Large ribosomal subunit protein uL14 (122 aa).

It belongs to the universal ribosomal protein uL14 family. Part of the 50S ribosomal subunit. Forms a cluster with proteins L3 and L19. In the 70S ribosome, L14 and L19 interact and together make contacts with the 16S rRNA in bridges B5 and B8.

Its function is as follows. Binds to 23S rRNA. Forms part of two intersubunit bridges in the 70S ribosome. The sequence is that of Large ribosomal subunit protein uL14 from Chlamydia caviae (strain ATCC VR-813 / DSM 19441 / 03DC25 / GPIC) (Chlamydophila caviae).